The following is a 336-amino-acid chain: Holliday junction branch migration complex subunit RuvB (336 aa).

The interval 4–184 (ADRLVSADSS…FGIVQRLEFY (181 aa)) is large ATPase domain (RuvB-L). Residues Ile-23, Arg-24, Gly-65, Lys-68, Thr-69, Thr-70, 131 to 133 (EDY), Arg-174, Tyr-184, and Arg-221 each bind ATP. A Mg(2+)-binding site is contributed by Thr-69. The segment at 185–255 (QIPDLQHIVS…IAAQALDMLN (71 aa)) is small ATPAse domain (RuvB-S). The tract at residues 258-336 (AEGFDYMDRK…HFGITPPEMP (79 aa)) is head domain (RuvB-H). Residues Arg-294, Arg-313, and Arg-318 each coordinate DNA.

It belongs to the RuvB family. As to quaternary structure, homohexamer. Forms an RuvA(8)-RuvB(12)-Holliday junction (HJ) complex. HJ DNA is sandwiched between 2 RuvA tetramers; dsDNA enters through RuvA and exits via RuvB. An RuvB hexamer assembles on each DNA strand where it exits the tetramer. Each RuvB hexamer is contacted by two RuvA subunits (via domain III) on 2 adjacent RuvB subunits; this complex drives branch migration. In the full resolvosome a probable DNA-RuvA(4)-RuvB(12)-RuvC(2) complex forms which resolves the HJ.

It localises to the cytoplasm. The enzyme catalyses ATP + H2O = ADP + phosphate + H(+). Its function is as follows. The RuvA-RuvB-RuvC complex processes Holliday junction (HJ) DNA during genetic recombination and DNA repair, while the RuvA-RuvB complex plays an important role in the rescue of blocked DNA replication forks via replication fork reversal (RFR). RuvA specifically binds to HJ cruciform DNA, conferring on it an open structure. The RuvB hexamer acts as an ATP-dependent pump, pulling dsDNA into and through the RuvAB complex. RuvB forms 2 homohexamers on either side of HJ DNA bound by 1 or 2 RuvA tetramers; 4 subunits per hexamer contact DNA at a time. Coordinated motions by a converter formed by DNA-disengaged RuvB subunits stimulates ATP hydrolysis and nucleotide exchange. Immobilization of the converter enables RuvB to convert the ATP-contained energy into a lever motion, pulling 2 nucleotides of DNA out of the RuvA tetramer per ATP hydrolyzed, thus driving DNA branch migration. The RuvB motors rotate together with the DNA substrate, which together with the progressing nucleotide cycle form the mechanistic basis for DNA recombination by continuous HJ branch migration. Branch migration allows RuvC to scan DNA until it finds its consensus sequence, where it cleaves and resolves cruciform DNA. The chain is Holliday junction branch migration complex subunit RuvB from Klebsiella pneumoniae subsp. pneumoniae (strain ATCC 700721 / MGH 78578).